Consider the following 156-residue polypeptide: Cell division protein SepF (156 aa).

The disordered stretch occupies residues Asn30–Lys49.

This sequence belongs to the SepF family. In terms of assembly, homodimer. Interacts with FtsZ.

The protein resides in the cytoplasm. Its function is as follows. Cell division protein that is part of the divisome complex and is recruited early to the Z-ring. Probably stimulates Z-ring formation, perhaps through the cross-linking of FtsZ protofilaments. Its function overlaps with FtsA. The protein is Cell division protein SepF of Exiguobacterium sp. (strain ATCC BAA-1283 / AT1b).